Here is a 953-residue protein sequence, read N- to C-terminus: Translation initiation factor IF-2 (953 aa).

Disordered stretches follow at residues lysine 52 to leucine 247 and threonine 279 to lysine 363. Composition is skewed to basic and acidic residues over residues threonine 80–glutamine 89, phenylalanine 98–alanine 111, and glutamine 140–lysine 188. Residues arginine 191 to serine 207 are compositionally biased toward polar residues. Positions arginine 229–leucine 247 are enriched in basic and acidic residues. Residues lysine 282–threonine 291 are compositionally biased toward polar residues. Basic and acidic residues predominate over residues alanine 300 to lysine 317. Low complexity predominate over residues serine 322–asparagine 338. Over residues lysine 339–asparagine 348 the composition is skewed to basic residues. Residues glutamate 454–lysine 623 enclose the tr-type G domain. The interval glycine 463–threonine 470 is G1. Residue glycine 463 to threonine 470 coordinates GTP. A G2 region spans residues glycine 488–histidine 492. The G3 stretch occupies residues aspartate 509–glycine 512. GTP is bound by residues aspartate 509–histidine 513 and asparagine 563–aspartate 566. The tract at residues asparagine 563–aspartate 566 is G4. The tract at residues serine 599–lysine 601 is G5.

This sequence belongs to the TRAFAC class translation factor GTPase superfamily. Classic translation factor GTPase family. IF-2 subfamily.

Its subcellular location is the cytoplasm. Its function is as follows. One of the essential components for the initiation of protein synthesis. Protects formylmethionyl-tRNA from spontaneous hydrolysis and promotes its binding to the 30S ribosomal subunits. Also involved in the hydrolysis of GTP during the formation of the 70S ribosomal complex. The chain is Translation initiation factor IF-2 from Streptococcus pyogenes serotype M5 (strain Manfredo).